A 386-amino-acid polypeptide reads, in one-letter code: Microtubule-binding protein TANGLED1 (386 aa).

Disordered regions lie at residues 83–105 (RMRGGASAQKRSPSGKFGGGVGG), 140–202 (AAGA…RVRS), 244–266 (HASTSAATDPCATPSPSKKQKRL), 303–330 (PARPAAVSPPPPVKAQASPAKTRRCSFS), and 345–386 (RLSL…ISSR). Residues 170–180 (RARRAREKQSH) show a composition bias toward basic residues. Residues 181–193 (RGGAATRGADAAT) show a composition bias toward low complexity. Residues 375–386 (TVRTVSSKISSR) are compositionally biased toward polar residues.

Expressed in vegetative shoot tips consisting of leaf primordia and the bases of immature leaves, the shoot apical meristem, and unexpanded stem tissue. Strongly expressed in tissues enriched in dividing cells: ear primordia and embryos.

It is found in the cytoplasm. It localises to the cytoskeleton. Its subcellular location is the spindle. The protein resides in the phragmoplast. In terms of biological role, is required for spatial control cell division during leaf development. Through an association with microtubules, acts both for the positioning of cytoskeletal arrays that establish planes of cell division during prophase and for spatial guidance of expanding phragmoplasts toward preestablished cortical division sites (CDS) during cytokinesis. The sequence is that of Microtubule-binding protein TANGLED1 (TAN1) from Zea mays (Maize).